Reading from the N-terminus, the 1866-residue chain is Protein strawberry notch homolog (1866 aa).

Over residues 19 to 28 the composition is skewed to low complexity; it reads QQSSPTPSTS. 5 disordered regions span residues 19-63, 132-151, 156-253, 561-581, and 1112-1308; these read QQSS…HSSS, TAPTVNQSEPSTPTVTIVPK, LFET…GLPI, GMASPRLQTTPQPLTKSQKAK, and GLSG…ARGS. Polar residues-rich tracts occupy residues 37 to 63 and 134 to 146; these read QSFSNNTHTPSVSQFFDETSNDSHSSS and PTVNQSEPSTPTV. Over residues 161–176 the composition is skewed to low complexity; the sequence is TADSPTPSGDTSTTAS. Polar residues-rich tracts occupy residues 191–203 and 210–228; these read DRQNPMFVQTARS and TPSTSATVSPHITSSLTQR. Low complexity predominate over residues 229–239; it reads SHTSSPASSAS. A compositionally biased stretch (polar residues) spans 566–577; it reads RLQTTPQPLTKS. Low complexity predominate over residues 1112-1126; sequence GLSGIGRSSMSSSTG. Residues 1142–1152 are compositionally biased toward acidic residues; sequence DGSDDEVENDM. The span at 1164–1177 shows a compositional bias: basic and acidic residues; sequence ESAREEAEGARTLE. Acidic residues predominate over residues 1194-1213; sequence SSSDDSDEEVVKDEDEDEEA. Basic and acidic residues-rich tracts occupy residues 1262–1281 and 1290–1304; these read RDEEEAERLREKVRKREERR and RRAEREKQRRNEELQ.

This sequence belongs to the SBNO family. As to expression, expressed in the somatic gonad, neurons, hypodermal cells, seam cells, the excretory system, and intestinal cells (at protein level).

It localises to the nucleus. Functionally, transcriptional activator that functions upstream of the let-60/Ras and let-23/EGFR signaling pathways to positively regulate lin-3 expression and thereby promote vulval induction. Plays a role in excretory duct development. Plays a role in male tail development. In Caenorhabditis elegans, this protein is Protein strawberry notch homolog.